The following is a 271-amino-acid chain: 4-hydroxy-tetrahydrodipicolinate reductase (271 aa).

NAD(+)-binding positions include 10–15 (GAGGRM), glutamate 36, 100–102 (GTT), and 124–127 (SGNM). The Proton donor/acceptor role is filled by histidine 157. Histidine 158 lines the (S)-2,3,4,5-tetrahydrodipicolinate pocket. The active-site Proton donor is the lysine 161. Position 167–168 (167–168 (GT)) interacts with (S)-2,3,4,5-tetrahydrodipicolinate.

This sequence belongs to the DapB family.

Its subcellular location is the cytoplasm. It catalyses the reaction (S)-2,3,4,5-tetrahydrodipicolinate + NAD(+) + H2O = (2S,4S)-4-hydroxy-2,3,4,5-tetrahydrodipicolinate + NADH + H(+). It carries out the reaction (S)-2,3,4,5-tetrahydrodipicolinate + NADP(+) + H2O = (2S,4S)-4-hydroxy-2,3,4,5-tetrahydrodipicolinate + NADPH + H(+). It functions in the pathway amino-acid biosynthesis; L-lysine biosynthesis via DAP pathway; (S)-tetrahydrodipicolinate from L-aspartate: step 4/4. Its function is as follows. Catalyzes the conversion of 4-hydroxy-tetrahydrodipicolinate (HTPA) to tetrahydrodipicolinate. This is 4-hydroxy-tetrahydrodipicolinate reductase from Rhodopseudomonas palustris (strain BisB5).